The following is a 419-amino-acid chain: Tryptophan synthase beta chain (419 aa).

An N6-(pyridoxal phosphate)lysine modification is found at Lys-113.

This sequence belongs to the TrpB family. Tetramer of two alpha and two beta chains. Pyridoxal 5'-phosphate is required as a cofactor.

The enzyme catalyses (1S,2R)-1-C-(indol-3-yl)glycerol 3-phosphate + L-serine = D-glyceraldehyde 3-phosphate + L-tryptophan + H2O. It participates in amino-acid biosynthesis; L-tryptophan biosynthesis; L-tryptophan from chorismate: step 5/5. Functionally, the beta subunit is responsible for the synthesis of L-tryptophan from indole and L-serine. This chain is Tryptophan synthase beta chain, found in Picrophilus torridus (strain ATCC 700027 / DSM 9790 / JCM 10055 / NBRC 100828 / KAW 2/3).